Consider the following 469-residue polypeptide: NADH-quinone oxidoreductase subunit N (469 aa).

Helical transmembrane passes span 2 to 22 (IALLPFILSLAATFINIFLCV), 28 to 48 (RYSINLNILFWVIIFISFFIV), 70 to 90 (FSFCFGVVLSALMIIFLISSF), 101 to 121 (EMFALASLAGFGLLAMSLSVE), 122 to 142 (LILTLIFLEVASISIYAMIAM), 157 to 177 (FLLSSFMSAFYLLGAAFVFGV), 194 to 214 (FLSIIGMILVLSMMFFKIAIF), 233 to 253 (GFLASAFKLASFAILIKLCFL), 261 to 281 (ILQGIFAILAILSMFAGNLLS), 290 to 310 (ILIAAGIVHSGYIFINLSSVG), 315 to 335 (IYPAIFYLSTYTIVVGFLFAI), 361 to 381 (AFAFTVICLSFIGFPYSVGFL), 398 to 418 (LAIFGIINTIFSVYYYLKIII), and 447 to 467 (ILFIILEGSGIFSIISFLNLF).

It belongs to the complex I subunit 2 family. As to quaternary structure, NDH-1 is composed of 14 different subunits. Subunits NuoA, H, J, K, L, M, N constitute the membrane sector of the complex.

The protein localises to the cell inner membrane. It carries out the reaction a quinone + NADH + 5 H(+)(in) = a quinol + NAD(+) + 4 H(+)(out). Its function is as follows. NDH-1 shuttles electrons from NADH, via FMN and iron-sulfur (Fe-S) centers, to quinones in the respiratory chain. The immediate electron acceptor for the enzyme in this species is believed to be ubiquinone. Couples the redox reaction to proton translocation (for every two electrons transferred, four hydrogen ions are translocated across the cytoplasmic membrane), and thus conserves the redox energy in a proton gradient. The polypeptide is NADH-quinone oxidoreductase subunit N (Campylobacter fetus subsp. fetus (strain 82-40)).